The primary structure comprises 315 residues: Olfactory receptor 3A1 (315 aa).

The Extracellular segment spans residues 1-28 (MQPESGANGTVIAEFILLGLLEAPGLQP). Asn-8 carries N-linked (GlcNAc...) asparagine glycosylation. The helical transmembrane segment at 29 to 52 (VVFVLFLFAYLVTVRGNLSILAAV) threads the bilayer. Over 53–60 (LVEPKLHT) the chain is Cytoplasmic. Residues 61 to 82 (PMYFFLGNLSVLDVGCISVTVP) form a helical membrane-spanning segment. Residues 83–103 (SMLSRLLSRKRAVPCGACLTQ) lie on the Extracellular side of the membrane. Cys-100 and Cys-192 are joined by a disulfide. Residues 104 to 123 (LFFFHLFVGVDCFLLTAMAY) form a helical membrane-spanning segment. Topologically, residues 124 to 143 (DRFLAICRPLTYSTRMSQTV) are cytoplasmic. Residues 144-161 (QRMLVAASWACAFTNALT) traverse the membrane as a helical segment. The Extracellular portion of the chain corresponds to 162-199 (HTVAMSTLNFCGPNVINHFYCDLPQLFQLSCSSTQLNE). The chain crosses the membrane as a helical span at residues 200–223 (LLLFAVGFIMAGTPMALIVISYIH). Over 224-240 (VAAAVLRIRSVEGRKKA) the chain is Cytoplasmic. Residues 241-264 (FSTCGSHLTVVAIFYGSGIFNYMR) form a helical membrane-spanning segment. The Extracellular segment spans residues 265 to 275 (LGSTKLSDKDK). The helical transmembrane segment at 276-295 (AVGIFNTVINPMLNPIIYSF) threads the bilayer. The Cytoplasmic portion of the chain corresponds to 296-315 (RNPDVQSAIWRMLTGRRSLA).

Belongs to the G-protein coupled receptor 1 family.

The protein resides in the cell membrane. Functionally, odorant receptor. This is Olfactory receptor 3A1 (OR3A1) from Homo sapiens (Human).